We begin with the raw amino-acid sequence, 58 residues long: Bestoxin (58 aa).

Residues 3-58 enclose the LCN-type CS-alpha/beta domain; sequence VPGNYPLDKDGNTYTCLELGENKDCQKVCKLHGVQYGYCYAFSCWCKEYLDDKDSV. 3 disulfides stabilise this stretch: C18–C41, C27–C46, and C31–C48.

Expressed by the venom gland.

It localises to the secreted. Functionally, beta toxins bind voltage-independently at site-4 of sodium channels (Nav) and shift the voltage of activation toward more negative potentials thereby affecting sodium channel activation and promoting spontaneous and repetitive firing. In mice, causes intense writhing. This chain is Bestoxin, found in Parabuthus transvaalicus (Transvaal thick-tailed scorpion).